Here is a 185-residue protein sequence, read N- to C-terminus: Large ribosomal subunit protein uL5 (185 aa).

It belongs to the universal ribosomal protein uL5 family. Part of the 50S ribosomal subunit; part of the 5S rRNA/L5/L18/L25 subcomplex. Contacts the 5S rRNA and the P site tRNA. Forms a bridge to the 30S subunit in the 70S ribosome.

Its function is as follows. This is one of the proteins that bind and probably mediate the attachment of the 5S RNA into the large ribosomal subunit, where it forms part of the central protuberance. In the 70S ribosome it contacts protein S13 of the 30S subunit (bridge B1b), connecting the 2 subunits; this bridge is implicated in subunit movement. Contacts the P site tRNA; the 5S rRNA and some of its associated proteins might help stabilize positioning of ribosome-bound tRNAs. This chain is Large ribosomal subunit protein uL5, found in Rhizobium etli (strain CIAT 652).